A 311-amino-acid chain; its full sequence is Methionyl-tRNA formyltransferase (311 aa).

Position 114–117 (114–117 (SLLP)) interacts with (6S)-5,6,7,8-tetrahydrofolate.

It belongs to the Fmt family.

The enzyme catalyses L-methionyl-tRNA(fMet) + (6R)-10-formyltetrahydrofolate = N-formyl-L-methionyl-tRNA(fMet) + (6S)-5,6,7,8-tetrahydrofolate + H(+). Attaches a formyl group to the free amino group of methionyl-tRNA(fMet). The formyl group appears to play a dual role in the initiator identity of N-formylmethionyl-tRNA by promoting its recognition by IF2 and preventing the misappropriation of this tRNA by the elongation apparatus. This is Methionyl-tRNA formyltransferase from Corynebacterium diphtheriae (strain ATCC 700971 / NCTC 13129 / Biotype gravis).